Here is a 160-residue protein sequence, read N- to C-terminus: Ribonuclease H (160 aa).

The 157-residue stretch at 1–157 (MNIEIYTDGA…CDRLAVEACQ (157 aa)) folds into the RNase H type-1 domain. The Mg(2+) site is built by Asp8, Glu49, Asp85, and Asp149.

It belongs to the RNase H family. As to quaternary structure, monomer. The cofactor is Mg(2+).

It localises to the cytoplasm. The enzyme catalyses Endonucleolytic cleavage to 5'-phosphomonoester.. In terms of biological role, endonuclease that specifically degrades the RNA of RNA-DNA hybrids. In Treponema denticola (strain ATCC 35405 / DSM 14222 / CIP 103919 / JCM 8153 / KCTC 15104), this protein is Ribonuclease H.